The primary structure comprises 400 residues: Elongation factor Tu (400 aa).

The tr-type G domain occupies 10 to 208 (KPHVNVGTIG…AMDNYIPEPQ (199 aa)). The interval 19–26 (GHIDHGKS) is G1. 19–26 (GHIDHGKS) contacts GTP. A Mg(2+)-binding site is contributed by serine 26. Positions 60–64 (GITIN) are G2. The interval 81–84 (DCPG) is G3. GTP is bound by residues 81 to 85 (DCPGH) and 136 to 139 (NKTD). The interval 136-139 (NKTD) is G4. The tract at residues 174-176 (SAL) is G5.

Belongs to the TRAFAC class translation factor GTPase superfamily. Classic translation factor GTPase family. EF-Tu/EF-1A subfamily. As to quaternary structure, monomer.

The protein localises to the cytoplasm. The catalysed reaction is GTP + H2O = GDP + phosphate + H(+). Its function is as follows. GTP hydrolase that promotes the GTP-dependent binding of aminoacyl-tRNA to the A-site of ribosomes during protein biosynthesis. In Thermotoga petrophila (strain ATCC BAA-488 / DSM 13995 / JCM 10881 / RKU-1), this protein is Elongation factor Tu.